A 256-amino-acid chain; its full sequence is Ubiquinone/menaquinone biosynthesis C-methyltransferase UbiE (256 aa).

Over residues Met-1–Gly-19 the composition is skewed to polar residues. Residues Met-1–Pro-24 form a disordered region. Residues Thr-81, Asp-102, and Asp-128–Ala-129 contribute to the S-adenosyl-L-methionine site.

The protein belongs to the class I-like SAM-binding methyltransferase superfamily. MenG/UbiE family.

It carries out the reaction a 2-demethylmenaquinol + S-adenosyl-L-methionine = a menaquinol + S-adenosyl-L-homocysteine + H(+). It catalyses the reaction a 2-methoxy-6-(all-trans-polyprenyl)benzene-1,4-diol + S-adenosyl-L-methionine = a 5-methoxy-2-methyl-3-(all-trans-polyprenyl)benzene-1,4-diol + S-adenosyl-L-homocysteine + H(+). It participates in quinol/quinone metabolism; menaquinone biosynthesis; menaquinol from 1,4-dihydroxy-2-naphthoate: step 2/2. It functions in the pathway cofactor biosynthesis; ubiquinone biosynthesis. Functionally, methyltransferase required for the conversion of demethylmenaquinol (DMKH2) to menaquinol (MKH2) and the conversion of 2-polyprenyl-6-methoxy-1,4-benzoquinol (DDMQH2) to 2-polyprenyl-3-methyl-6-methoxy-1,4-benzoquinol (DMQH2). This chain is Ubiquinone/menaquinone biosynthesis C-methyltransferase UbiE, found in Bordetella avium (strain 197N).